Here is a 143-residue protein sequence, read N- to C-terminus: Large ribosomal subunit protein uL15 (143 aa).

The tract at residues Met-1–Pro-56 is disordered. The segment covering Arg-21–Ala-31 has biased composition (gly residues).

Belongs to the universal ribosomal protein uL15 family. In terms of assembly, part of the 50S ribosomal subunit.

In terms of biological role, binds to the 23S rRNA. The polypeptide is Large ribosomal subunit protein uL15 (Delftia acidovorans (strain DSM 14801 / SPH-1)).